We begin with the raw amino-acid sequence, 115 residues long: Translation initiation factor 1A 2 (115 aa).

The disordered stretch occupies residues 1–34 (MANYRSTIRHRNSGSRKSVSGDTHEVTRVRTPQK). Basic and acidic residues predominate over residues 22–34 (DTHEVTRVRTPQK). Positions 27-101 (TRVRTPQKDR…SKADVTWKYT (75 aa)) constitute an S1-like domain.

It belongs to the eIF-1A family.

Its function is as follows. Seems to be required for maximal rate of protein biosynthesis. Enhances ribosome dissociation into subunits and stabilizes the binding of the initiator Met-tRNA(I) to 40 S ribosomal subunits. In Methanosarcina barkeri (strain Fusaro / DSM 804), this protein is Translation initiation factor 1A 2.